A 104-amino-acid chain; its full sequence is Phosphocarrier protein HPr (104 aa).

The region spanning 17-104 (ELSAIFMIRN…EVFNSGFGEL (88 aa)) is the HPr domain. Histidine 31 functions as the Pros-phosphohistidine intermediate in the catalytic mechanism.

It belongs to the HPr family.

The protein resides in the cytoplasm. General (non sugar-specific) component of the phosphoenolpyruvate-dependent sugar phosphotransferase system (sugar PTS). This major carbohydrate active-transport system catalyzes the phosphorylation of incoming sugar substrates concomitantly with their translocation across the cell membrane. The phosphoryl group from phosphoenolpyruvate (PEP) is transferred to the phosphoryl carrier protein HPr by enzyme I. Phospho-HPr then transfers it to the PTS EIIA domain. In Chlamydia muridarum (strain MoPn / Nigg), this protein is Phosphocarrier protein HPr (ptsH).